Here is a 904-residue protein sequence, read N- to C-terminus: Translation initiation factor IF-2 (904 aa).

The interval 239 to 316 (QAATQAKTSE…DDGQGSFQAP (78 aa)) is disordered. The segment covering 248-278 (EGAEKGTLHKKPETPGKKGDKGGRAADDGKK) has biased composition (basic and acidic residues). Residues 404–571 (HRAPVVTVMG…QVLLQAEILE (168 aa)) form the tr-type G domain. Residues 413-420 (GHVDHGKT) are G1. Residue 413 to 420 (GHVDHGKT) participates in GTP binding. The G2 stretch occupies residues 438–442 (GITQH). Residues 459 to 462 (DTPG) are G3. GTP is bound by residues 459–463 (DTPGH) and 513–516 (NKID). Residues 513 to 516 (NKID) are G4. Residues 549–551 (SAK) form a G5 region.

The protein belongs to the TRAFAC class translation factor GTPase superfamily. Classic translation factor GTPase family. IF-2 subfamily.

Its subcellular location is the cytoplasm. Its function is as follows. One of the essential components for the initiation of protein synthesis. Protects formylmethionyl-tRNA from spontaneous hydrolysis and promotes its binding to the 30S ribosomal subunits. Also involved in the hydrolysis of GTP during the formation of the 70S ribosomal complex. This is Translation initiation factor IF-2 from Dechloromonas aromatica (strain RCB).